The sequence spans 100 residues: Urease subunit gamma (100 aa).

The protein belongs to the urease gamma subunit family. As to quaternary structure, heterotrimer of UreA (gamma), UreB (beta) and UreC (alpha) subunits. Three heterotrimers associate to form the active enzyme.

Its subcellular location is the cytoplasm. It catalyses the reaction urea + 2 H2O + H(+) = hydrogencarbonate + 2 NH4(+). It functions in the pathway nitrogen metabolism; urea degradation; CO(2) and NH(3) from urea (urease route): step 1/1. This is Urease subunit gamma from Burkholderia multivorans (strain ATCC 17616 / 249).